The chain runs to 351 residues: MVPTEKLAQITERFEYIEARMAAGAAGEDIAALGREYAELKPVVAEIAAYSRARADLAEAEAMLDDPEMRALAEEEIPALKARIPEMEQALRLALLPKDAADARPAMIEIRPGTGGEEAALFAGDLLRMYQRYAEAQGWRFQIVSESLTELGGIKEVIAHVSGSGVFAKLKYESGVHRVQRVPVTESGGRIHTSAATVAVLPEAEAVDIDIPASDIRIDTMRASGAGGQHVNTTDSAVRITHIPTGLVVTSSEKSQHRNRDIAMQVLRARLYDLERQRADAERSAARKGQVGSGDRSERIRTYNFPQGRMTDHRINLTLYKLDQVMQGDLDEVIAALAADDQARLLAEVEG.

Gln229 is subject to N5-methylglutamine.

It belongs to the prokaryotic/mitochondrial release factor family. Methylated by PrmC. Methylation increases the termination efficiency of RF1.

It is found in the cytoplasm. In terms of biological role, peptide chain release factor 1 directs the termination of translation in response to the peptide chain termination codons UAG and UAA. The chain is Peptide chain release factor 1 from Dinoroseobacter shibae (strain DSM 16493 / NCIMB 14021 / DFL 12).